The following is a 785-amino-acid chain: MQRSAKLKIRAPRKFSANQVDFATHWEVLQRAIGDIFQKSTSQLSFEELYRNAYILVLHKYGEKLYNHVQDVIRSRLKEETVPAIYKNYDASLLGNALLDIRKNDSYSTSWSRSLEAAHRFLSSLVNSWKDHIVSMQMISSVLKYLDKVYSKSADKVPVNENGIYIFREVVLLNSFEIGEKCVETILILVYLERKGNTINRPLINDCLDMLNSLPSENKKETLYDVLFAPKFLSYTRNFYEIESSTVIGVFGVVEYLKKAEKRFEEEKERSKNYLFTKIASPLLSVVEDELLSKHLDDLLENQSTGFFSMIDSSNFEGLQLVYESFSRVELGVKSLKKYLAKYVAHHGKLINETTSQALEGKMAVGRLSSNATMATLWVQKVLALWDRLNTIISTTMDADRSILNSLSDAFVTFVDGYTRAPEYISLFIDDNLKKDARKAIEGSIEATLQNSVTLFRFISEKDVFEKYYKTHLAKRLLNNRSISSDAELGMISRLKQEAGNVFTQKLEGMFNDMNLSQELLQEYKHNSALQSAKPALDLNVSILASTFWPIDLSPHKIKCNFPKVLLAQIDQFTDFYLSKHTGRKLLWYPSMGSADVRVNFKDRKYDLNVSTIASVILLLFQDLKENQCLIFEEILEKTNIEVGDLKRNLQSLACAKYKILLKDPKGREVNAGDKFYFNENFVSNLARIKISTVAQTRVEDDSERKRTLEKVDESRKHQADACIVRVMKDRKVCEHNQLMAEVTRQLNPRFHPSPMMIKRRIEALIEREYLQRQADNGRIYEYLA.

Residues 715 to 777 (SRKHQADACI…REYLQRQADN (63 aa)) form the Cullin neddylation domain. Lys-729 is covalently cross-linked (Glycyl lysine isopeptide (Lys-Gly) (interchain with G-Cter in NEDD8)).

Belongs to the cullin family. Probable component of multiple cullin-RING-based BC3B (BTB-CUL3-BTB) E3 ubiquitin-protein ligase complexes formed by cul-3, rbx-1 and a variable BTB domain-containing protein as adapter and substrate recognition component. Interacts with btb1, btb2, btb3, nedd8 and pip1. Neddylated; enhancing the ubiquitin-ligase activity.

The protein localises to the cytoplasm. It functions in the pathway protein modification; protein ubiquitination. Functionally, probable core component of multiple cullin-RING-based BC3B (BTB-CUL3-BTB) E3 ubiquitin-protein ligase complexes which mediate the ubiquitination and subsequent proteasomal degradation of target proteins. As a scaffold protein may contribute to catalysis through positioning of the substrate and the ubiquitin-conjugating enzyme. The functional specificity of the BC3B complex depends on the substrate recognition component. Involved in ubiquitin-mediated degradation of btb3. The chain is Cullin-3 (cul3) from Schizosaccharomyces pombe (strain 972 / ATCC 24843) (Fission yeast).